The chain runs to 427 residues: Galactose-3-O-sulfotransferase 3 (427 aa).

Residues Met1–Ile19 are Cytoplasmic-facing. A helical; Signal-anchor for type II membrane protein membrane pass occupies residues Leu20–Ser40. At Trp41–His427 the chain is on the lumenal side. N-linked (GlcNAc...) asparagine glycans are attached at residues Asn90, Asn109, Asn176, and Asn301. The disordered stretch occupies residues Met404 to His427.

It belongs to the galactose-3-O-sulfotransferase family. Mg(2+) is required as a cofactor.

The protein localises to the golgi apparatus. It is found in the golgi stack membrane. Its pathway is protein modification; carbohydrate sulfation. In terms of biological role, transfers a sulfate to position 3 of non-reducing beta-galactosyl residues in N-glycans and core2-branched O-glycans. Has high activity towards Gal-beta-1,4-GlcNAc, Gal-beta-1,4(Fuc-alpha-1,3)GlcNAc and lower activity towards Gal-beta-1,3(Fuc-alpha-1,4)GlcNAc. The chain is Galactose-3-O-sulfotransferase 3 (GAL3ST3) from Bos taurus (Bovine).